The chain runs to 295 residues: Large ribosomal subunit protein uL15m (295 aa).

The transit peptide at 1–20 directs the protein to the mitochondrion; it reads MAGTARGCGTSLDLLRSLPR. Residues 21 to 67 are disordered; sequence VSLANLKPSPNSRKRERRPRDRRRGRKCGRGHKGERQRGTRPRLGFE. Residues 32–51 show a composition bias toward basic residues; it reads SRKRERRPRDRRRGRKCGRG.

The protein belongs to the universal ribosomal protein uL15 family. As to quaternary structure, component of the mitochondrial ribosome large subunit (39S) which comprises a 16S rRNA and about 50 distinct proteins.

It localises to the mitochondrion. In Mus musculus (Mouse), this protein is Large ribosomal subunit protein uL15m (Mrpl15).